The following is a 932-amino-acid chain: 2-oxoglutarate dehydrogenase E1 component (932 aa).

It belongs to the alpha-ketoglutarate dehydrogenase family. As to quaternary structure, homodimer. Part of the 2-oxoglutarate dehydrogenase (OGDH) complex composed of E1 (2-oxoglutarate dehydrogenase), E2 (dihydrolipoamide succinyltransferase) and E3 (dihydrolipoamide dehydrogenase); the complex contains multiple copies of the three enzymatic components (E1, E2 and E3). The cofactor is thiamine diphosphate.

The enzyme catalyses N(6)-[(R)-lipoyl]-L-lysyl-[protein] + 2-oxoglutarate + H(+) = N(6)-[(R)-S(8)-succinyldihydrolipoyl]-L-lysyl-[protein] + CO2. E1 component of the 2-oxoglutarate dehydrogenase (OGDH) complex which catalyzes the decarboxylation of 2-oxoglutarate, the first step in the conversion of 2-oxoglutarate to succinyl-CoA and CO(2). In Staphylococcus aureus (strain JH9), this protein is 2-oxoglutarate dehydrogenase E1 component.